The chain runs to 524 residues: Probable pectinesterase/pectinesterase inhibitor 19 (524 aa).

An N-terminal signal peptide occupies residues 1–22; sequence MLVKVFSFFILMITMVVIGVSK. Positions 23 to 172 are pectinesterase inhibitor 19; it reads EYCDDKQSCQ…ISRARIALAL (150 aa). The pectinesterase 19 stretch occupies residues 215 to 510; sequence DVVVAKDGTG…FTVAKLLDGE (296 aa). Asn-265 and Asn-281 each carry an N-linked (GlcNAc...) asparagine glycan. Thr-290 lines the substrate pocket. The Proton donor; for pectinesterase activity role is filled by Asp-343. A disulfide bond links Cys-357 and Cys-377. Catalysis depends on Asp-364, which acts as the Nucleophile; for pectinesterase activity. An N-linked (GlcNAc...) asparagine glycan is attached at Asn-412. Substrate contacts are provided by Arg-430 and Trp-432.

It in the N-terminal section; belongs to the PMEI family. The protein in the C-terminal section; belongs to the pectinesterase family. In terms of tissue distribution, expressed in siliques, but not in flower buds.

The protein localises to the secreted. The protein resides in the cell wall. The enzyme catalyses [(1-&gt;4)-alpha-D-galacturonosyl methyl ester](n) + n H2O = [(1-&gt;4)-alpha-D-galacturonosyl](n) + n methanol + n H(+). Its pathway is glycan metabolism; pectin degradation; 2-dehydro-3-deoxy-D-gluconate from pectin: step 1/5. Its function is as follows. Acts in the modification of cell walls via demethylesterification of cell wall pectin. The protein is Probable pectinesterase/pectinesterase inhibitor 19 (PME19) of Arabidopsis thaliana (Mouse-ear cress).